A 332-amino-acid polypeptide reads, in one-letter code: Protein pelota homolog (332 aa).

This sequence belongs to the eukaryotic release factor 1 family. Pelota subfamily. In terms of assembly, monomer. It depends on a divalent metal cation as a cofactor.

The protein resides in the cytoplasm. In terms of biological role, may function in recognizing stalled ribosomes, interact with stem-loop structures in stalled mRNA molecules, and effect endonucleolytic cleavage of the mRNA. May play a role in the release non-functional ribosomes and degradation of damaged mRNAs. Has endoribonuclease activity. This Pyrobaculum calidifontis (strain DSM 21063 / JCM 11548 / VA1) protein is Protein pelota homolog.